The primary structure comprises 166 residues: Regulatory protein RecX (166 aa).

This sequence belongs to the RecX family.

It is found in the cytoplasm. Functionally, modulates RecA activity. This Escherichia coli O7:K1 (strain IAI39 / ExPEC) protein is Regulatory protein RecX.